We begin with the raw amino-acid sequence, 161 residues long: uncharacterized protein (161 aa).

A helical transmembrane segment spans residues 16 to 36 (KLGLVVAIFFFMMGTTVVVLY).

The protein resides in the membrane. This is an uncharacterized protein from Encephalitozoon cuniculi (strain GB-M1) (Microsporidian parasite).